The primary structure comprises 482 residues: tRNA sulfurtransferase (482 aa).

The THUMP domain maps to 61 to 165; it reads DVTLAVLTQT…NDKLNLIIAR (105 aa). Residues 183-184, Lys-265, Gly-287, and Gln-296 each bind ATP; that span reads LI. Cysteines 344 and 456 form a disulfide. The region spanning 404–482 is the Rhodanese domain; that stretch reads LGSDVVVLDI…GYKNVKVYRP (79 aa). Cys-456 serves as the catalytic Cysteine persulfide intermediate.

It belongs to the ThiI family.

It is found in the cytoplasm. The enzyme catalyses [ThiI sulfur-carrier protein]-S-sulfanyl-L-cysteine + a uridine in tRNA + 2 reduced [2Fe-2S]-[ferredoxin] + ATP + H(+) = [ThiI sulfur-carrier protein]-L-cysteine + a 4-thiouridine in tRNA + 2 oxidized [2Fe-2S]-[ferredoxin] + AMP + diphosphate. The catalysed reaction is [ThiS sulfur-carrier protein]-C-terminal Gly-Gly-AMP + S-sulfanyl-L-cysteinyl-[cysteine desulfurase] + AH2 = [ThiS sulfur-carrier protein]-C-terminal-Gly-aminoethanethioate + L-cysteinyl-[cysteine desulfurase] + A + AMP + 2 H(+). Its pathway is cofactor biosynthesis; thiamine diphosphate biosynthesis. Functionally, catalyzes the ATP-dependent transfer of a sulfur to tRNA to produce 4-thiouridine in position 8 of tRNAs, which functions as a near-UV photosensor. Also catalyzes the transfer of sulfur to the sulfur carrier protein ThiS, forming ThiS-thiocarboxylate. This is a step in the synthesis of thiazole, in the thiamine biosynthesis pathway. The sulfur is donated as persulfide by IscS. In Aliivibrio fischeri (strain ATCC 700601 / ES114) (Vibrio fischeri), this protein is tRNA sulfurtransferase.